The following is a 126-amino-acid chain: Protein mmf2, mitochondrial (126 aa).

This sequence belongs to the RutC family.

It localises to the mitochondrion. The protein resides in the cytoplasm. Its function is as follows. Plays a role in the maintenance of mitochondrial DNA. In Schizosaccharomyces pombe (strain 972 / ATCC 24843) (Fission yeast), this protein is Protein mmf2, mitochondrial (mmf2).